The chain runs to 290 residues: Eukaryotic translation initiation factor 3 subunit G (290 aa).

The interval 1–34 (MSRLGNRAADWADDEEFDDPSALPAQQVTTNKDG) is disordered. The region spanning 210-288 (ATLRVTNVSE…LILRVEFAKR (79 aa)) is the RRM domain.

It belongs to the eIF-3 subunit G family. Component of the eukaryotic translation initiation factor 3 (eIF-3) complex.

The protein resides in the cytoplasm. RNA-binding component of the eukaryotic translation initiation factor 3 (eIF-3) complex, which is involved in protein synthesis of a specialized repertoire of mRNAs and, together with other initiation factors, stimulates binding of mRNA and methionyl-tRNAi to the 40S ribosome. The eIF-3 complex specifically targets and initiates translation of a subset of mRNAs involved in cell proliferation. This subunit can bind 18S rRNA. This Aspergillus fumigatus (strain CBS 144.89 / FGSC A1163 / CEA10) (Neosartorya fumigata) protein is Eukaryotic translation initiation factor 3 subunit G (tif35).